A 576-amino-acid chain; its full sequence is 2-succinyl-5-enolpyruvyl-6-hydroxy-3-cyclohexene-1-carboxylate synthase (576 aa).

This sequence belongs to the TPP enzyme family. MenD subfamily. Homodimer. Mg(2+) is required as a cofactor. It depends on Mn(2+) as a cofactor. Requires thiamine diphosphate as cofactor.

It carries out the reaction isochorismate + 2-oxoglutarate + H(+) = 5-enolpyruvoyl-6-hydroxy-2-succinyl-cyclohex-3-ene-1-carboxylate + CO2. It functions in the pathway quinol/quinone metabolism; 1,4-dihydroxy-2-naphthoate biosynthesis; 1,4-dihydroxy-2-naphthoate from chorismate: step 2/7. Its pathway is quinol/quinone metabolism; menaquinone biosynthesis. In terms of biological role, catalyzes the thiamine diphosphate-dependent decarboxylation of 2-oxoglutarate and the subsequent addition of the resulting succinic semialdehyde-thiamine pyrophosphate anion to isochorismate to yield 2-succinyl-5-enolpyruvyl-6-hydroxy-3-cyclohexene-1-carboxylate (SEPHCHC). The sequence is that of 2-succinyl-5-enolpyruvyl-6-hydroxy-3-cyclohexene-1-carboxylate synthase from Photobacterium profundum (strain SS9).